The sequence spans 423 residues: Cyclin-B2-1 (423 aa).

Positions 1 to 61 (MDRASENRRL…EKSGKEEQKP (61 aa)) are disordered. Residues 49-60 (PMLEKSGKEEQK) show a composition bias toward basic and acidic residues.

Belongs to the cyclin family. Cyclin AB subfamily. In terms of assembly, interacts with CDKB2-1. Expressed in the intercalary meristem and the elongation zone of internodes. Expressed in adventitious roots at all nodes under submergence conditions.

Its function is as follows. Involved in the control of the cell cycle at the G2/M (mitosis) transition. May activate CDKB2-1 kinase. The protein is Cyclin-B2-1 (CYCB2-1) of Oryza sativa subsp. indica (Rice).